Consider the following 198-residue polypeptide: Recombination protein RecR (198 aa).

Residues 56–71 (CEICGNVSEQATCSIC) form a C4-type zinc finger. The Toprim domain maps to 79 to 174 (ALICVVEEAK…RVTRLASGLP (96 aa)).

This sequence belongs to the RecR family.

In terms of biological role, may play a role in DNA repair. It seems to be involved in an RecBC-independent recombinational process of DNA repair. It may act with RecF and RecO. This chain is Recombination protein RecR, found in Leifsonia xyli subsp. xyli (strain CTCB07).